Reading from the N-terminus, the 258-residue chain is Phosphoribosylaminoimidazole-succinocarboxamide synthase (258 aa).

The protein belongs to the SAICAR synthetase family.

It carries out the reaction 5-amino-1-(5-phospho-D-ribosyl)imidazole-4-carboxylate + L-aspartate + ATP = (2S)-2-[5-amino-1-(5-phospho-beta-D-ribosyl)imidazole-4-carboxamido]succinate + ADP + phosphate + 2 H(+). It participates in purine metabolism; IMP biosynthesis via de novo pathway; 5-amino-1-(5-phospho-D-ribosyl)imidazole-4-carboxamide from 5-amino-1-(5-phospho-D-ribosyl)imidazole-4-carboxylate: step 1/2. This is Phosphoribosylaminoimidazole-succinocarboxamide synthase from Sphingopyxis alaskensis (strain DSM 13593 / LMG 18877 / RB2256) (Sphingomonas alaskensis).